The primary structure comprises 623 residues: tRNA uridine 5-carboxymethylaminomethyl modification enzyme MnmG (623 aa).

Position 12-17 (12-17 (GAGHAG)) interacts with FAD. Position 272-286 (272-286 (GPRYCPSIEDKINRF)) interacts with NAD(+).

This sequence belongs to the MnmG family. As to quaternary structure, homodimer. Heterotetramer of two MnmE and two MnmG subunits. FAD serves as cofactor.

The protein localises to the cytoplasm. In terms of biological role, NAD-binding protein involved in the addition of a carboxymethylaminomethyl (cmnm) group at the wobble position (U34) of certain tRNAs, forming tRNA-cmnm(5)s(2)U34. The chain is tRNA uridine 5-carboxymethylaminomethyl modification enzyme MnmG from Flavobacterium psychrophilum (strain ATCC 49511 / DSM 21280 / CIP 103535 / JIP02/86).